A 215-amino-acid polypeptide reads, in one-letter code: Deoxyadenosine kinase (215 aa).

9-17 (GPIGAGKSS) contacts ATP. 3 residues coordinate substrate: glutamate 33, tyrosine 45, and asparagine 56. Aspartate 79 functions as the Proton acceptor in the catalytic mechanism. Residues arginine 80, aspartate 85, and glutamate 150 each coordinate substrate.

It belongs to the DCK/DGK family. As to quaternary structure, heterodimer of a deoxyadenosine (DAK) and a deoxyguanosine kinase (DGK).

The enzyme catalyses 2'-deoxyadenosine + ATP = dAMP + ADP + H(+). In terms of biological role, DGK/DAK plays an essential role in generating the deoxyribonucleotide precursors, dGTP and dATP, for DNA metabolism. The polypeptide is Deoxyadenosine kinase (Lactobacillus acidophilus (strain ATCC 700396 / NCK56 / N2 / NCFM)).